Here is a 435-residue protein sequence, read N- to C-terminus: Methionine aminopeptidase 2-2 (435 aa).

Positions 1 to 92 are disordered; the sequence is MAAQTTEKLQ…VPVSNLFPNN (92 aa). A compositionally biased stretch (low complexity) spans 24–33; that stretch reads DAPAAGQAEA. The span at 34 to 45 shows a compositional bias: acidic residues; that stretch reads GEAEEDSDDEKD. The span at 59–73 shows a compositional bias: basic residues; the sequence is AKKKKRKSKKKKKGG. A substrate-binding site is contributed by H197. Residues D217, D228, and H297 each coordinate a divalent metal cation. H305 contacts substrate. A divalent metal cation contacts are provided by E330 and E425.

Belongs to the peptidase M24A family. Methionine aminopeptidase eukaryotic type 2 subfamily. The cofactor is Co(2+). Requires Zn(2+) as cofactor. Mn(2+) serves as cofactor. It depends on Fe(2+) as a cofactor.

The protein resides in the cytoplasm. The enzyme catalyses Release of N-terminal amino acids, preferentially methionine, from peptides and arylamides.. In terms of biological role, cotranslationally removes the N-terminal methionine from nascent proteins. The N-terminal methionine is often cleaved when the second residue in the primary sequence is small and uncharged (Met-Ala-, Cys, Gly, Pro, Ser, Thr, or Val). The chain is Methionine aminopeptidase 2-2 from Aspergillus clavatus (strain ATCC 1007 / CBS 513.65 / DSM 816 / NCTC 3887 / NRRL 1 / QM 1276 / 107).